The following is a 578-amino-acid chain: Glucans biosynthesis protein G (578 aa).

Residues 1–37 (MIVSPCIAPRIPGTRLRKAMLAGVALVGLLSAGQLWA) form the signal peptide. Residues 511–578 (VPVEAPKPAK…TWSYQLPADE (68 aa)) are disordered. Over residues 517–543 (KPAKDSKQDKAAAKHAHAKAEKAKAEQ) the composition is skewed to basic and acidic residues. Over residues 544 to 554 (PAEQPAADAAS) the composition is skewed to low complexity.

This sequence belongs to the OpgD/OpgG family.

The protein resides in the periplasm. The protein operates within glycan metabolism; osmoregulated periplasmic glucan (OPG) biosynthesis. Functionally, involved in the biosynthesis of osmoregulated periplasmic glucans (OPGs). This chain is Glucans biosynthesis protein G, found in Pseudomonas entomophila (strain L48).